The primary structure comprises 317 residues: Aquaporin-2 (317 aa).

At 1 to 75 (MSLRDDLTIN…RSQEFKMQHR (75 aa)) the chain is on the cytoplasmic side. A helical transmembrane segment spans residues 76–96 (EFLAEFIGTLILVLLTCGFCA). Topologically, residues 97–108 (EQTLNIEKSKSW) are extracellular. Residues 109 to 129 (LTSSLGSGLSVLIGICVAGHV) form a helical membrane-spanning segment. The Cytoplasmic portion of the chain corresponds to 130 to 154 (SGGHLNPAITIAFWVFSGFPIRKVP). The short motif at 135 to 137 (NPA) is the NPA 1 element. The chain crosses the membrane as a helical span at residues 155-175 (MYITAQLLGAFSGAALLYSIV). Residues 176–208 (EPAISQFDHGKRQILGELGTAGIFGTYPPLYVG) lie on the Extracellular side of the membrane. Residues 209–229 (TGSAVASEVVGTAMLLLVVMV) traverse the membrane as a helical segment. The Cytoplasmic segment spans residues 230-242 (TGHPNNLPFRTAQ). Residues 243–263 (GAMIALGVTTISLCIGYTSGF) form a helical membrane-spanning segment. Over 264 to 295 (SLNPARDFGPRLFTAVAGWGIDVFTVHHYYAL) the chain is Extracellular. The NPA 2 signature appears at 266–268 (NPA). Residues 296–316 (VPMFAPILGGLAGGFIYTVFI) form a helical membrane-spanning segment. Position 317 (Asp-317) is a topological domain, cytoplasmic.

It belongs to the MIP/aquaporin (TC 1.A.8) family.

The protein resides in the cell membrane. It catalyses the reaction H2O(in) = H2O(out). The enzyme catalyses glycerol(in) = glycerol(out). Functionally, water channel required to facilitate the transport of water across membranes. Contributes to water uptake of spores during the early stages of spore germination. Aquaporins AQP1 and AQP2 act as extracellular pH sensors and enable the spores to hydrate under favorable conditions and to commence germination. Wounded vegetables and fruit present acidic pH, so the optimal pH range for germination is adapted to the relevant host pH. The protein is Aquaporin-2 of Rhizopus delemar (strain RA 99-880 / ATCC MYA-4621 / FGSC 9543 / NRRL 43880) (Mucormycosis agent).